The sequence spans 634 residues: Factor of DNA methylation 5 (634 aa).

Residues 254–469 are a coiled coil; it reads IVVDDLANKI…EDTNSALMVK (216 aa).

Its function is as follows. Acts in association with FDM3 and FDM4 for RNA-directed DNA methylation (RdDM). This chain is Factor of DNA methylation 5, found in Arabidopsis thaliana (Mouse-ear cress).